The sequence spans 174 residues: Adipose-secreted signaling protein (174 aa).

At Ala2 the chain carries N-acetylalanine. Thr147 carries the post-translational modification Phosphothreonine.

This sequence belongs to the ADISSP family. Expression is adipose-specific and highly brown adipose tissue-enriched.

The protein resides in the secreted. Its function is as follows. Adipocyte-secreted protein (adipokine) that acts as a key regulator for white adipose tissue (WAT) thermogenesis and glucose homeostasis at least in part through activation of protein kinase A (PKA). This Mus musculus (Mouse) protein is Adipose-secreted signaling protein.